A 236-amino-acid chain; its full sequence is Small ribosomal subunit protein uS5 (236 aa).

Residues 61 to 124 (ENQEIIDIAL…NYAKLNIIEI (64 aa)) form the S5 DRBM domain.

This sequence belongs to the universal ribosomal protein uS5 family. In terms of assembly, part of the 30S ribosomal subunit. Contacts protein S4.

Its function is as follows. With S4 and S12 plays an important role in translational accuracy. This chain is Small ribosomal subunit protein uS5, found in Pyrococcus horikoshii (strain ATCC 700860 / DSM 12428 / JCM 9974 / NBRC 100139 / OT-3).